Consider the following 468-residue polypeptide: Na(+)/H(+) antiporter NhaA (468 aa).

The next 10 helical transmembrane spans lie at 32–52 (FLHI…IALL), 83–103 (LHFW…GMEI), 119–139 (ALPM…YLAI), 148–168 (GWAV…ALLG), 178–198 (FLLA…AVAF), 205–225 (GGFL…WIGV), 320–340 (ALHP…NAGV), 354–374 (GAMF…IVSV), 397–417 (LVGL…TLAF), and 428–448 (LGVL…GFIY).

Belongs to the NhaA Na(+)/H(+) (TC 2.A.33) antiporter family.

The protein localises to the cell inner membrane. The catalysed reaction is Na(+)(in) + 2 H(+)(out) = Na(+)(out) + 2 H(+)(in). Functionally, na(+)/H(+) antiporter that extrudes sodium in exchange for external protons. The polypeptide is Na(+)/H(+) antiporter NhaA (Cupriavidus necator (strain ATCC 17699 / DSM 428 / KCTC 22496 / NCIMB 10442 / H16 / Stanier 337) (Ralstonia eutropha)).